The sequence spans 66 residues: Large ribosomal subunit protein bL33c (66 aa).

The protein belongs to the bacterial ribosomal protein bL33 family.

Its subcellular location is the plastid. It localises to the chloroplast. This Lepidium virginicum (Virginia pepperweed) protein is Large ribosomal subunit protein bL33c.